The following is a 209-amino-acid chain: MTDQGIVKINASLRENVGTGPARAVRRNGGIPAVVYGKNRDSLSVFLSDREFLSKHRSAALSTHLIELEIGDKKEYVLMRDVQKHPVTDRIQHVDFQFIDYGTEIKIEVPLIFTNEQKCIGVKRGGVLNILHRTLSIKCLPNAILQNIEIDLSDLTAGHSIHVSDLNLPPEINVVMKEHNPAIVTISSTSMEKEGEGSQEPTAAPSSEN.

The disordered stretch occupies residues 188–209; the sequence is STSMEKEGEGSQEPTAAPSSEN. Polar residues predominate over residues 199-209; sequence QEPTAAPSSEN.

Belongs to the bacterial ribosomal protein bL25 family. CTC subfamily. Part of the 50S ribosomal subunit; part of the 5S rRNA/L5/L18/L25 subcomplex. Contacts the 5S rRNA. Binds to the 5S rRNA independently of L5 and L18.

Functionally, this is one of the proteins that binds to the 5S RNA in the ribosome where it forms part of the central protuberance. The protein is Large ribosomal subunit protein bL25 of Ehrlichia canis (strain Jake).